A 162-amino-acid chain; its full sequence is Protein FAM162B (162 aa).

The disordered stretch occupies residues 26–69; the sequence is EATRRPAPALPPRGLPCYSSGGAPSNSGPQGHGEIHRVPTQRRP. A helical transmembrane segment spans residues 107–127; sequence VKACYIMIGLTIIACFAVIVS.

It belongs to the UPF0389 family.

Its subcellular location is the membrane. In Homo sapiens (Human), this protein is Protein FAM162B (FAM162B).